The following is an 844-amino-acid chain: Bifunctional abietadiene synthase, chloroplastic (844 aa).

A chloroplast-targeting transit peptide spans 1-46; that stretch reads QSIPHFSTTLNAGSSARKRRSLYLRWGKGSNKIIACVGEGATSVPY. A substrate-binding site is contributed by Lys-245. Residues Asp-378 and Asp-380 each contribute to the Mg(2+) site. The DXDD motif signature appears at 378 to 381; the sequence is DIDD. Lys-465 lines the substrate pocket. Mg(2+) is bound by residues Asp-597, Asp-601, Asn-741, Thr-745, and Glu-749. The short motif at 597-601 is the DDXXD motif element; the sequence is DDLYD.

The protein belongs to the terpene synthase family. Tpsd subfamily. As to quaternary structure, monomer. Mg(2+) is required as a cofactor.

It localises to the plastid. It is found in the chloroplast. It catalyses the reaction (2E,6E,10E)-geranylgeranyl diphosphate = (+)-copalyl diphosphate. The enzyme catalyses (+)-copalyl diphosphate = abieta-7,13-diene + diphosphate. The catalysed reaction is (+)-copalyl diphosphate = neoabietadiene + diphosphate. It carries out the reaction (+)-copalyl diphosphate = abieta-8(14),12-diene + diphosphate. Its pathway is terpene metabolism; oleoresin biosynthesis. Functionally, involved in defensive oleoresin formation in conifers in response to insect attack or other injury. Involved in diterpene (C20) olefins biosynthesis. Bifunctional enzyme that catalyzes two sequential cyclizations of geranylgeranyl diphosphate (GGPP) to abietadiene. The copalyl diphosphate (CPP) intermediate diffuses freely between the 2 active sites in the enzyme. This is Bifunctional abietadiene synthase, chloroplastic (LAS) from Abies balsamea (Balsam fir).